A 319-amino-acid chain; its full sequence is tRNA uridine(34) hydroxylase (319 aa).

One can recognise a Rhodanese domain in the interval 133–231 (EDPDSVVIDT…YLEDVSSENS (99 aa)). The Cysteine persulfide intermediate role is filled by cysteine 191.

The protein belongs to the TrhO family.

It catalyses the reaction uridine(34) in tRNA + AH2 + O2 = 5-hydroxyuridine(34) in tRNA + A + H2O. Functionally, catalyzes oxygen-dependent 5-hydroxyuridine (ho5U) modification at position 34 in tRNAs. The polypeptide is tRNA uridine(34) hydroxylase (Prochlorococcus marinus (strain NATL1A)).